A 623-amino-acid polypeptide reads, in one-letter code: Kelch repeat and BTB domain-containing protein 2 (623 aa).

A BTB domain is found at 31–98; the sequence is TDIVLIVEGT…AYTGNLAMND (68 aa). Positions 133–229 constitute a BACK domain; it reads CVRLLSFADL…IRIDALSEVT (97 aa). S300 is subject to Phosphoserine. Kelch repeat units follow at residues 317 to 380, 381 to 429, 431 to 469, 470 to 529, and 535 to 581; these read DIYI…CCEG, YIYA…VVHD, IYVM…AFGD, KIFY…RAVV, and CVFM…DFRC.

In terms of assembly, component of the BCR(KBTBD2) E3 ubiquitin ligase complex, at least composed of CUL3, KBTBD2 and RBX1. Interacts (via the BTB domain) with CUL3.

It participates in protein modification; protein ubiquitination. In terms of biological role, substrate-specific adapter of a BCR (BTB-CUL3-RBX1) E3 ubiquitin ligase complex that acts as a regulator of the insulin signaling pathway, modulating insulin sensitivity by limiting PIK3R1/p85alpha abundance in adipocytes. Targets PIK3R1, the regulatory subunit of phosphatidylinositol 3-kinase (PI3K), for 'Lys-48'-linked polyubiquitination and proteasome-mediated degradation. This is Kelch repeat and BTB domain-containing protein 2 from Homo sapiens (Human).